We begin with the raw amino-acid sequence, 334 residues long: GTP 3',8-cyclase (334 aa).

Positions 13–239 (RFQRKFYYLR…KARADNDGPA (227 aa)) constitute a Radical SAM core domain. Arginine 22 is a GTP binding site. [4Fe-4S] cluster-binding residues include cysteine 29 and cysteine 33. Tyrosine 35 lines the S-adenosyl-L-methionine pocket. Cysteine 36 is a [4Fe-4S] cluster binding site. Arginine 73 is a binding site for GTP. Glycine 77 serves as a coordination point for S-adenosyl-L-methionine. Threonine 104 lines the GTP pocket. Serine 128 provides a ligand contact to S-adenosyl-L-methionine. Lysine 165 lines the GTP pocket. Residue methionine 199 participates in S-adenosyl-L-methionine binding. The [4Fe-4S] cluster site is built by cysteine 262 and cysteine 265. Position 267–269 (267–269 (RLR)) interacts with GTP. Cysteine 279 lines the [4Fe-4S] cluster pocket.

Belongs to the radical SAM superfamily. MoaA family. In terms of assembly, monomer and homodimer. It depends on [4Fe-4S] cluster as a cofactor.

The enzyme catalyses GTP + AH2 + S-adenosyl-L-methionine = (8S)-3',8-cyclo-7,8-dihydroguanosine 5'-triphosphate + 5'-deoxyadenosine + L-methionine + A + H(+). The protein operates within cofactor biosynthesis; molybdopterin biosynthesis. Functionally, catalyzes the cyclization of GTP to (8S)-3',8-cyclo-7,8-dihydroguanosine 5'-triphosphate. This chain is GTP 3',8-cyclase, found in Vibrio cholerae serotype O1 (strain M66-2).